The chain runs to 102 residues: NADH-quinone oxidoreductase subunit K (102 aa).

3 helical membrane passes run 6 to 26 (LIGIMILAAGLFAVGVFGVLA), 30 to 50 (MLFQLVALEVALSGPALGFIA), and 63 to 83 (MFILVLTLAAAEVAVGLALFL).

The protein belongs to the complex I subunit 4L family. As to quaternary structure, NDH-1 is composed of 14 different subunits. Subunits NuoA, H, J, K, L, M, N constitute the membrane sector of the complex.

Its subcellular location is the cell inner membrane. The catalysed reaction is a quinone + NADH + 5 H(+)(in) = a quinol + NAD(+) + 4 H(+)(out). In terms of biological role, NDH-1 shuttles electrons from NADH, via FMN and iron-sulfur (Fe-S) centers, to quinones in the respiratory chain. The immediate electron acceptor for the enzyme in this species is believed to be ubiquinone. Couples the redox reaction to proton translocation (for every two electrons transferred, four hydrogen ions are translocated across the cytoplasmic membrane), and thus conserves the redox energy in a proton gradient. The chain is NADH-quinone oxidoreductase subunit K from Rhodopseudomonas palustris (strain TIE-1).